The chain runs to 518 residues: MSRNDVIDDEVHGVHGEYDDSSTLTGSHEDLDVKRPQSLSGEIAFIVVVCMAQLVSQAGLGQVISILPVLGDSFGIGNNMSQLSWFPAAYSLTVGTFILGAGRLGDLYGHKLLFTAGYFWLAIWTLVAAFAESSGPVFFCCCRVLQGIGPAFLLPNGMAILARSYEPGTRKEMVFSAFGSTAPSGFIFGGLVSALAAKYQSWPWGFWFMAILEAVCGIAAIFWVPRTPTPRRETTHSLWARMDIAGCVTGISGLLLFNVALNMAPGARWQDPYIYILLIASLVFFGLFGYIERKAVFPLIPFSAITPDISFVLATLACGWAAFGVWVFYGWEFVQNFRGISPLFACLQFSPAAISGFVASFTTGLILQKLPASVVMMISAAAFCTADTLYATMPIAQSYWAQLFVSIIVMPWGMEMSFPASNILLSNAMPQEHQGVSASLVATIMNYAISLGLGFGAIVETDLNKNGTDLLRGYRGAWYLGVGLAASGIILTMFFALHEYRKSVPMKNKAASREEYLA.

Residues 43-63 (IAFIVVVCMAQLVSQAGLGQV) traverse the membrane as a helical segment. A glycan (N-linked (GlcNAc...) asparagine) is linked at N79. The next 12 membrane-spanning stretches (helical) occupy residues 82–102 (QLSW…LGAG), 112–132 (LLFT…AFAE), 135–155 (GPVF…FLLP), 177–197 (AFGS…ALAA), 204–224 (WGFW…IFWV), 244–264 (IAGC…LNMA), 272–292 (PYIY…GYIE), 311–331 (FVLA…FYGW), 339–359 (GISP…GFVA), 364–384 (GLIL…AAFC), 400–420 (WAQL…SFPA), and 439–459 (SLVA…GAIV). N466 carries an N-linked (GlcNAc...) asparagine glycan. A helical membrane pass occupies residues 477–497 (AWYLGVGLAASGIILTMFFAL).

Belongs to the major facilitator superfamily.

Its subcellular location is the cell membrane. In terms of biological role, efflux pump that might be required for efficient secretion of terrein or other secondary metabolies produced by the terrein genne cluster. In Aspergillus terreus (strain NIH 2624 / FGSC A1156), this protein is Efflux pump terJ.